The sequence spans 356 residues: A-type ATP synthase subunit C (356 aa).

Belongs to the V-ATPase V0D/AC39 subunit family. Has multiple subunits with at least A(3), B(3), C, D, E, F, H, I and proteolipid K(x).

The protein localises to the cell membrane. Its function is as follows. Component of the A-type ATP synthase that produces ATP from ADP in the presence of a proton gradient across the membrane. The polypeptide is A-type ATP synthase subunit C (Thermoplasma acidophilum (strain ATCC 25905 / DSM 1728 / JCM 9062 / NBRC 15155 / AMRC-C165)).